The following is a 191-amino-acid chain: dCTP deaminase, dUMP-forming (191 aa).

DCTP contacts are provided by residues 101 to 106 (KSSLGR), aspartate 119, 127 to 129 (TLE), glutamine 148, tyrosine 162, and glutamine 174. Catalysis depends on glutamate 129, which acts as the Proton donor/acceptor. The disordered stretch occupies residues 169–191 (SRYQGQRGPTASRSFQNFHRTQV). Over residues 171–191 (YQGQRGPTASRSFQNFHRTQV) the composition is skewed to polar residues.

This sequence belongs to the dCTP deaminase family. As to quaternary structure, homotrimer.

The catalysed reaction is dCTP + 2 H2O = dUMP + NH4(+) + diphosphate. The protein operates within pyrimidine metabolism; dUMP biosynthesis; dUMP from dCTP: step 1/1. Its function is as follows. Bifunctional enzyme that catalyzes both the deamination of dCTP to dUTP and the hydrolysis of dUTP to dUMP without releasing the toxic dUTP intermediate. This Streptomyces griseus subsp. griseus (strain JCM 4626 / CBS 651.72 / NBRC 13350 / KCC S-0626 / ISP 5235) protein is dCTP deaminase, dUMP-forming.